The primary structure comprises 91 residues: Mercuric transport protein periplasmic component (91 aa).

Positions 1-19 (MKKLLSALALAAVVAPVWA) are cleaved as a signal peptide. The HMA domain occupies 22–88 (QTVTLSVPGM…ATEDAGYPSS (67 aa)). Positions 33 and 36 each coordinate Hg(2+).

The protein belongs to the MerP family. In terms of assembly, monomer.

It is found in the periplasm. In terms of biological role, involved in mercury resistance. Acts as a mercury scavenger that specifically binds to a mercuric ion in the periplasm and probably passes it to the cytoplasmic mercuric reductase MerA via the mercuric transport protein MerT. In Pseudomonas fluorescens, this protein is Mercuric transport protein periplasmic component.